The chain runs to 184 residues: Cytosolic Prostaglandin E synthase (184 aa).

One can recognise a CS domain in the interval 7–96; it reads LIPPPVSWAQ…AAGPYWSSLT (90 aa). Residues 115 to 184 form a disordered region; it reads ESDDEEGDQK…EGDKEKKPAA (70 aa). Phosphoserine occurs at positions 116, 127, 135, 156, and 162. Positions 147 to 158 are enriched in acidic residues; it reads FNVDDEEEDSDD. Residues 175–184 are compositionally biased toward basic and acidic residues; the sequence is EGDKEKKPAA.

The protein belongs to the p23/wos2 family.

It localises to the cytoplasm. The enzyme catalyses prostaglandin H2 = prostaglandin E2. Functionally, cytosolic prostaglandin synthase that catalyzes the oxidoreduction of prostaglandin endoperoxide H2 (PGH2) to prostaglandin E2 (PGE2). Through production of PGE2 may regulate the activity of non-muscle myosin II in an autocrine or paracrine fashion; this may influence border cell and nurse cell stiffness to facilitate border cell migration during oogenesis. In Drosophila melanogaster (Fruit fly), this protein is Cytosolic Prostaglandin E synthase.